We begin with the raw amino-acid sequence, 100 residues long: NADH-quinone oxidoreductase subunit K (100 aa).

A run of 3 helical transmembrane segments spans residues 4-24 (LQHG…GLVI), 28-48 (LLFM…AFVV), and 60-80 (VMYI…LALL).

It belongs to the complex I subunit 4L family. In terms of assembly, NDH-1 is composed of 13 different subunits. Subunits NuoA, H, J, K, L, M, N constitute the membrane sector of the complex.

Its subcellular location is the cell inner membrane. It carries out the reaction a quinone + NADH + 5 H(+)(in) = a quinol + NAD(+) + 4 H(+)(out). In terms of biological role, NDH-1 shuttles electrons from NADH, via FMN and iron-sulfur (Fe-S) centers, to quinones in the respiratory chain. The immediate electron acceptor for the enzyme in this species is believed to be ubiquinone. Couples the redox reaction to proton translocation (for every two electrons transferred, four hydrogen ions are translocated across the cytoplasmic membrane), and thus conserves the redox energy in a proton gradient. The protein is NADH-quinone oxidoreductase subunit K of Musicola paradisiaca (strain Ech703) (Dickeya paradisiaca).